Reading from the N-terminus, the 195-residue chain is Proline-rich protein 3 (195 aa).

The signal sequence occupies residues 1-29 (MKMNFFNSFPQYGVYILGLNLLLCGVSEG).

Component of the acid-insoluble organic matrix of calcified layers of the shell (at protein level).

The protein localises to the secreted. This chain is Proline-rich protein 3, found in Lottia gigantea (Giant owl limpet).